The sequence spans 290 residues: Outer dense fiber protein 4 (290 aa).

Serine 28 carries the post-translational modification Phosphoserine. Helical transmembrane passes span 44 to 64, 125 to 145, 164 to 184, and 201 to 221; these read AQVVASEFSLVAFLLLLVMVF, PVFGVAKISFTLAIGLGFVLT, LIGIILSFCEVTLIFLTLLLF, and IGWSYFIGWLVLILYFTCGIL. The disordered stretch occupies residues 247 to 290; it reads GPESLVSPSQTPSSQENSQESPKDDQKPSSPDKVVSPPQPDTTG. The span at 252 to 266 shows a compositional bias: polar residues; the sequence is VSPSQTPSSQENSQE.

Expressed in testis.

The protein resides in the membrane. Its function is as follows. Component of the outer dense fibers (ODF) of spermatozoa which could be involved in sperm tail structure, sperm movement and general organization of cellular cytoskeleton. The protein is Outer dense fiber protein 4 (Odf4) of Mus musculus (Mouse).